The primary structure comprises 571 residues: Streptolysin O (571 aa).

The signal sequence occupies residues 1 to 33; that stretch reads MSNKKTFKKYSRVAGLLTAALIIGNLVTANAES. A disordered region spans residues 30-108; sequence NAESNKQNTA…KKSEEDHTEE (79 aa). Low complexity predominate over residues 37–48; sequence NTASTETTTTNE. 2 stretches are compositionally biased toward basic and acidic residues: residues 50–68 and 79–108; these read PKPESSELTTEKAGQKTDD and APKEMPLESAEKEEKKSEDKKKSEEDHTEE. 4 beta stranded membrane passes run 260 to 273, 280 to 289, 358 to 367, and 375 to 387; these read KSQIEAALNVNSKI, IDFKSISKGE, SNDVEAAFSA, and KTNGKYSDILENS. The short motif at 529–539 is the Conserved undecapeptide element; sequence ECTGLAWEWWR. Residues 561-562 carry the Cholesterol binding motif; that stretch reads TL.

The protein belongs to the cholesterol-dependent cytolysin family. Homooligomeric pore complex of 35 to 50 subunits; when inserted in the host membrane.

Its subcellular location is the secreted. The protein resides in the host cell membrane. Its function is as follows. A cholesterol-dependent toxin that causes cytolysis by forming pores in cholesterol containing host membranes. After binding to target membranes, the protein undergoes a major conformation change, leading to its insertion in the host membrane and formation of an oligomeric pore complex. Cholesterol is required for binding to host membranes, membrane insertion and pore formation; cholesterol binding is mediated by a Thr-Leu pair in the C-terminus. Can be reversibly inactivated by oxidation. The polypeptide is Streptolysin O (slo) (Streptococcus pyogenes serotype M18 (strain MGAS8232)).